We begin with the raw amino-acid sequence, 466 residues long: MQHGSLITVEYQTVNYVSGPLIFVERPKEISFGETAQIILPDGEARTGQILDISEDIAVVQVFEGTRGIDSHVTTVRFTGQSPLLDVSYDMLGRVLDGVGRPRDGGPEIIPEARLDIAGMPINPYSRDKPAEFIQTGISAIDALNTLVRGQKLPIFSGAGLPANQLAAQIAKQAKVLGEGENFAVVFAAMGITYKEASFFMKEFEESGALERVVFFLNLADDPTIERIATPRCALTAAEFLAYTHNLHVLVILTDMTNYCDALREISTAREEIPGRRGYPGYMYTDLATIYERAGRIKGCTGSITQIPILTMPDDDITHPVPDLTGYITEGQIVLSRDLFRKGINPPIDALPCLSRLMNLGIGPGKTREDHRNVADQLYASYAYGRDLRRLVAIVGEEALSELDRNYLKFADHFEKRFISQGNVERSIETTLQVAWELFSLLPDEELKRIKEEYIDKYRTLIISGG.

The protein belongs to the ATPase alpha/beta chains family. Has multiple subunits with at least A(3), B(3), C, D, E, F, H, I and proteolipid K(x).

The protein localises to the cell membrane. Component of the A-type ATP synthase that produces ATP from ADP in the presence of a proton gradient across the membrane. The B chain is a regulatory subunit. The protein is A-type ATP synthase subunit B 2 of Methanospirillum hungatei JF-1 (strain ATCC 27890 / DSM 864 / NBRC 100397 / JF-1).